Here is a 1129-residue protein sequence, read N- to C-terminus: SMC5-SMC6 complex localization factor protein 2 (1129 aa).

3 disordered regions span residues 71–178 (VKAR…SILN), 312–343 (NTSS…TEQA), and 955–1057 (MLYD…QLEG). Positions 72–87 (KARRHTLPHSSHRRSP) are enriched in basic residues. The span at 93–110 (LLFQQRPRNSSGQFTHNP) shows a compositional bias: polar residues. 2 stretches are compositionally biased toward basic and acidic residues: residues 112-130 (QKKD…KKEL) and 149-166 (RKSE…RPRV). Polar residues-rich tracts occupy residues 169 to 178 (QATSSSSILN) and 324 to 343 (TGRS…TEQA). Composition is skewed to acidic residues over residues 999–1014 (ESEE…EEDW) and 1033–1048 (SAED…EEES).

Belongs to the FAM178 family.

It is found in the nucleus. Functionally, plays a role in the DNA damage response (DDR) pathway by regulating postreplication repair of UV-damaged DNA and genomic stability maintenance. Promotes the recruitment of the SMC5-SMC6 complex to DNA lesions. In Danio rerio (Zebrafish), this protein is SMC5-SMC6 complex localization factor protein 2 (slf2).